The following is a 230-amino-acid chain: 3,4-dihydroxy-2-butanone 4-phosphate synthase (230 aa).

D-ribulose 5-phosphate is bound by residues 42–43 (RE), Asp47, 155–159 (RRGHT), and Glu179. Residue Glu43 participates in Mg(2+) binding. Residue His158 coordinates Mg(2+).

Belongs to the DHBP synthase family. In terms of assembly, homodimer. The cofactor is Mg(2+). Mn(2+) is required as a cofactor.

The catalysed reaction is D-ribulose 5-phosphate = (2S)-2-hydroxy-3-oxobutyl phosphate + formate + H(+). It functions in the pathway cofactor biosynthesis; riboflavin biosynthesis; 2-hydroxy-3-oxobutyl phosphate from D-ribulose 5-phosphate: step 1/1. In terms of biological role, catalyzes the conversion of D-ribulose 5-phosphate to formate and 3,4-dihydroxy-2-butanone 4-phosphate. The polypeptide is 3,4-dihydroxy-2-butanone 4-phosphate synthase (Bordetella bronchiseptica (strain ATCC BAA-588 / NCTC 13252 / RB50) (Alcaligenes bronchisepticus)).